An 82-amino-acid polypeptide reads, in one-letter code: Large ribosomal subunit protein bL31B (82 aa).

The protein belongs to the bacterial ribosomal protein bL31 family. Type B subfamily. As to quaternary structure, part of the 50S ribosomal subunit.

The protein is Large ribosomal subunit protein bL31B of Dichelobacter nodosus (strain VCS1703A).